Consider the following 348-residue polypeptide: UDP-N-acetyl-alpha-D-glucosaminouronate 4-epimerase (348 aa).

Phe-26, Ile-27, Asp-46, Thr-50, Gly-51, Asp-77, Ile-78, Gln-97, Tyr-165, Lys-169, and Val-195 together coordinate NAD(+). Residue Tyr-165 is the Proton acceptor of the active site.

Belongs to the NAD(P)-dependent epimerase/dehydratase family. As to quaternary structure, homodimer. The cofactor is NAD(+).

The enzyme catalyses UDP-2-acetamido-2-deoxy-alpha-D-glucuronate = UDP-2-acetamido-2-deoxy-alpha-D-galacturonate. The catalysed reaction is UDP-N-acetyl-alpha-D-glucosamine = UDP-N-acetyl-alpha-D-galactosamine. The protein operates within capsule biogenesis; capsule polysaccharide biosynthesis. It participates in glycan metabolism; Vi-antigen biosynthesis. In terms of biological role, epimerase required for the biosynthesis of the capsular polysaccharide, commonly referred as the Vi antigen, an important virulence factor. Catalyzes the reversible epimerization of UDP-N-acetylglucosaminuronic acid (UDP-GlcNAcA) to UDP-N-acetylgalactosaminuronic acid (UDP-GalNAcA). Also catalyzes, with lower efficiency, the reversible epimerization of UDP-N-acetylglucosamine (UDP-GlcNAc) to UDP-N-acetylgalactosamine (UDP-GalNAc). Cannot use UDP-glucose (UDP-Glc) and UDP-galactose (UDP-Gal) as substrates. In Salmonella typhi, this protein is UDP-N-acetyl-alpha-D-glucosaminouronate 4-epimerase.